The sequence spans 743 residues: TSL-kinase interacting protein 1 (743 aa).

Positions 53-104 (RQWAAWTHQEEESFFTALRQVGKNFEKITSRVQSKNKDQVRHYYYRLVRRMN) constitute an SANT domain. Disordered stretches follow at residues 486 to 523 (SGVH…PGEW) and 626 to 679 (SPKG…TPCG). Residues 488 to 499 (VHDRPARSRDDY) show a composition bias toward basic and acidic residues.

As to quaternary structure, interacts only with active kinase forms of TOUSLED. Interacts with SNL1. Phosphorylated in vitro by TOUSLED. Expressed in flowers, roots and leaves.

It is found in the nucleus. The polypeptide is TSL-kinase interacting protein 1 (TKI1) (Arabidopsis thaliana (Mouse-ear cress)).